The primary structure comprises 339 residues: Trace amine-associated receptor 1 (339 aa).

Over 1–25 the chain is Extracellular; the sequence is MMPFCHNIINISCVKNNWSNDVRAS. 3 disulfide bridges follow: cysteine 5-cysteine 178, cysteine 13-cysteine 88, and cysteine 96-cysteine 182. N-linked (GlcNAc...) asparagine glycans are attached at residues asparagine 10 and asparagine 17. The helical transmembrane segment at 26 to 46 threads the bilayer; that stretch reads LYSLMVLIILTTLVGNLIVIV. Over 47–59 the chain is Cytoplasmic; sequence SISHFKELHTPTN. Residues 60–80 form a helical membrane-spanning segment; sequence WLIHSMATVDFLPGCLVMPYS. Over 81 to 98 the chain is Extracellular; it reads MVRSAEHCWYFGEVFCKI. Residues 99–119 traverse the membrane as a helical segment; sequence HTSTDIMLSSASIFHLSFISI. Aspartate 103 contacts 2-phenylethylamine. At 120 to 136 the chain is on the cytoplasmic side; it reads DRYYAVCDPLRYKAKIN. A helical membrane pass occupies residues 137–157; the sequence is ILVICVMIFISWSVPAVFAFG. Residues 158–188 lie on the Extracellular side of the membrane; it reads MIFLELNFKGAEEIYYKHVHCRGGCSVFFSK. A helical membrane pass occupies residues 189-209; sequence ISGVLTFMTSFYIPGSIMLCV. Residues 210-252 are Cytoplasmic-facing; that stretch reads YYRIYLIAKEQARLINDANQKLQIGLEMKNGISQSKERKAVKT. Residues 253–273 form a helical membrane-spanning segment; the sequence is LGIVMGVFLICWCPFFICTVM. Topologically, residues 274 to 287 are extracellular; the sequence is DPFLHYIIPPTLND. Residues 288 to 308 form a helical membrane-spanning segment; sequence VLIWFGYLNSTFNPMVYAFFY. The Cytoplasmic segment spans residues 309–339; the sequence is PWFRKALKMMLFGKIFQKDSSRCKLFLELSS.

The protein belongs to the G-protein coupled receptor 1 family.

The protein resides in the endomembrane system. It is found in the endoplasmic reticulum membrane. It localises to the cell membrane. Intracellular G-protein coupled receptor for trace amines, which recognizes endogenous amine-containing metabolites such as beta-phenylethylamine (beta-PEA), 3-iodothyronamine (T1AM), isoamylamine (IAA), cadaverine (CAD), cyclohexylamine (CHA), p-tyramine (p-TYR), trimethylamine (TMA), octopamine and tryptamine. Also functions as a receptor for various drugs and psychoactive substances, such as amphetamine and methamphetamine. Unresponsive to classical biogenic amines, such as epinephrine and histamine and only partially activated by dopamine and serotonin. Expressed in both the central and peripheral nervous system: TAAR1 activation regulates the activity of several neurotransmitter signaling pathways by (1) decreasing the basal firing rates of the neurons involved and by (2) lowering the sensitivity of receptors to neurotransmitters. Ligand binding causes a conformation change that triggers signaling via guanine nucleotide-binding proteins (G proteins) and modulates the activity of downstream effectors. TAAR1 is coupled with different G(i)/G(o)-, G(s)- or G(q)/G(11) classes of G alpha proteins depending on the ligand. CAD-binding is coupled to G(i)/G(o) G alpha proteins and mediates inhibition of adenylate cyclase activity. T1AM- or beta-PEA-binding is coupled to G(s) G alpha proteins and mediates activation of adenylate cyclase activity. CHA- or IAA-binding is coupled to G(q)/G(11) G alpha proteins and activates phospholipase C-beta, releasing diacylglycerol (DAG) and inositol 1,4,5-trisphosphate (IP3) second messengers. TMA-binding is coupled with all three G(i)/G(o)-, G(s)- or G(q)/G(11) G alpha protein subtypes. The sequence is that of Trace amine-associated receptor 1 (TAAR1) from Pan troglodytes (Chimpanzee).